The primary structure comprises 81 residues: Photosystem I iron-sulfur center (81 aa).

4Fe-4S ferredoxin-type domains lie at 2 to 31 (SHTV…MVPW) and 39 to 68 (IASS…IRVY). 8 residues coordinate [4Fe-4S] cluster: Cys-11, Cys-14, Cys-17, Cys-21, Cys-48, Cys-51, Cys-54, and Cys-58.

The cyanobacterial PSI reaction center is composed of one copy each of PsaA,B,C,D,E,F,I,J,K,L,M and X, and forms trimeric complexes. [4Fe-4S] cluster serves as cofactor.

It localises to the cellular thylakoid membrane. The catalysed reaction is reduced [plastocyanin] + hnu + oxidized [2Fe-2S]-[ferredoxin] = oxidized [plastocyanin] + reduced [2Fe-2S]-[ferredoxin]. Its function is as follows. Apoprotein for the two 4Fe-4S centers FA and FB of photosystem I (PSI); essential for photochemical activity. FB is the terminal electron acceptor of PSI, donating electrons to ferredoxin. The C-terminus interacts with PsaA/B/D and helps assemble the protein into the PSI complex. Required for binding of PsaD and PsaE to PSI. PSI is a plastocyanin/cytochrome c6-ferredoxin oxidoreductase, converting photonic excitation into a charge separation, which transfers an electron from the donor P700 chlorophyll pair to the spectroscopically characterized acceptors A0, A1, FX, FA and FB in turn. The protein is Photosystem I iron-sulfur center of Microchaete diplosiphon (Fremyella diplosiphon).